A 372-amino-acid polypeptide reads, in one-letter code: NAD(P)H-quinone oxidoreductase subunit 1 (372 aa).

The next 8 membrane-spanning stretches (helical) occupy residues 29 to 49, 97 to 117, 130 to 150, 176 to 196, 204 to 224, 254 to 274, 308 to 328, and 347 to 367; these read WIPLPSFLMIIGATVGVLVVV, WLFTLGPVLVVLPVFVSYLIV, VGIFLWISLSSIAPIGLLMSG, LAFSVLAIAMMSNSLSTIDIV, ILGWNVWRQPVGLIIFWIAAL, FGLFYVGSYVNLVLSALVFAI, SLGITMTVLKAYFLVFIAVLL, and FLLPVSLVNLLLTAALKLAFP.

This sequence belongs to the complex I subunit 1 family. As to quaternary structure, NDH-1 is composed of at least 11 different subunits.

It is found in the cellular thylakoid membrane. It carries out the reaction a plastoquinone + NADH + (n+1) H(+)(in) = a plastoquinol + NAD(+) + n H(+)(out). The catalysed reaction is a plastoquinone + NADPH + (n+1) H(+)(in) = a plastoquinol + NADP(+) + n H(+)(out). In terms of biological role, NDH-1 shuttles electrons from an unknown electron donor, via FMN and iron-sulfur (Fe-S) centers, to quinones in the respiratory and/or the photosynthetic chain. The immediate electron acceptor for the enzyme in this species is believed to be plastoquinone. Couples the redox reaction to proton translocation, and thus conserves the redox energy in a proton gradient. This is NAD(P)H-quinone oxidoreductase subunit 1 from Rippkaea orientalis (strain PCC 8801 / RF-1) (Cyanothece sp. (strain PCC 8801)).